Consider the following 143-residue polypeptide: Transcription antitermination protein NusB (143 aa).

The protein belongs to the NusB family.

Functionally, involved in transcription antitermination. Required for transcription of ribosomal RNA (rRNA) genes. Binds specifically to the boxA antiterminator sequence of the ribosomal RNA (rrn) operons. The chain is Transcription antitermination protein NusB from Anaeromyxobacter sp. (strain Fw109-5).